The chain runs to 104 residues: uncharacterized protein (104 aa).

Positions 42–104 form a coiled coil; that stretch reads ARDSFDQDFE…AREERHKLGR (63 aa).

This sequence belongs to the WXG100 family.

This is an uncharacterized protein from Bacillus subtilis (strain 168).